We begin with the raw amino-acid sequence, 491 residues long: Protein SET DOMAIN GROUP 40 (491 aa).

An SET domain is found at 36 to 278; sequence HSLSVSDFPD…LGEQVLLCYG (243 aa).

The protein belongs to the class V-like SAM-binding methyltransferase superfamily.

This Arabidopsis thaliana (Mouse-ear cress) protein is Protein SET DOMAIN GROUP 40 (SDG40).